An 86-amino-acid polypeptide reads, in one-letter code: Small ribosomal subunit protein bS16 (86 aa).

The protein belongs to the bacterial ribosomal protein bS16 family.

The sequence is that of Small ribosomal subunit protein bS16 from Bordetella avium (strain 197N).